A 263-amino-acid chain; its full sequence is Ribosomal RNA small subunit methyltransferase A (263 aa).

Ile18, Gly43, Glu65, Asp91, and Asn110 together coordinate S-adenosyl-L-methionine.

Belongs to the class I-like SAM-binding methyltransferase superfamily. rRNA adenine N(6)-methyltransferase family. RsmA subfamily.

It is found in the cytoplasm. It catalyses the reaction adenosine(1518)/adenosine(1519) in 16S rRNA + 4 S-adenosyl-L-methionine = N(6)-dimethyladenosine(1518)/N(6)-dimethyladenosine(1519) in 16S rRNA + 4 S-adenosyl-L-homocysteine + 4 H(+). Specifically dimethylates two adjacent adenosines (A1518 and A1519) in the loop of a conserved hairpin near the 3'-end of 16S rRNA in the 30S particle. May play a critical role in biogenesis of 30S subunits. The polypeptide is Ribosomal RNA small subunit methyltransferase A (Ehrlichia chaffeensis (strain ATCC CRL-10679 / Arkansas)).